A 542-amino-acid polypeptide reads, in one-letter code: MTVMEHTKAAQIDLAQYGITGVTELVRNPSYEMLFAEETRSDLEGYERGVVTELGAVAVDTGIFTGRSPKDKFIVKDDTTRDTLWWTSDKAKNDNKPINQEVWNDLKALVTKQLSGKRVFVLDGYCGANADTRLSVRFITEVAWQAHFVKNMFIRPSEEELAHFKPDFVVMNGAKCTNAKWKEHGLNSENFTVFNLTERMQLIGGTWYGGEMKKGMFAMMNYFLPLQGIASMHCSANMGKAGDVAIFFGLSGTGKTTLSTDPKRALIGDDEHGWDDDGVFNFEGGCYAKTIKLSKEAEPDIYNAIRRDALLENVTVRSDGSIDFDDGSKTENTRVSYPIYHIDNIVKPVSKGGHATKVIFLSADAFGVLPPVSKLTPEQTKYHFLSGFTAKLAGTERGITEPTPTFSACFGAAFLTLHPTQYAEVLVKRMEAAGAEAYLVNTGWNGSGKRISIKDTRGIIDAILDGSIEKAETKHIPIFNLQVPTALPGVDPMILDPRDTYVDPLQWESKAKDLATRFINNFDKYTDNAEGKALVAAGPKLD.

The substrate site is built by Arg67, Tyr208, and Lys214. Residues Lys214, His233, and 249-257 (GLSGTGKTT) contribute to the ATP site. Positions 214 and 233 each coordinate Mn(2+). Asp270 is a Mn(2+) binding site. Residues Glu298, Arg334, 450-451 (RI), and Thr456 each bind ATP. Residue Arg334 coordinates substrate.

Belongs to the phosphoenolpyruvate carboxykinase (ATP) family. Monomer. Requires Mn(2+) as cofactor.

The protein localises to the cytoplasm. The catalysed reaction is oxaloacetate + ATP = phosphoenolpyruvate + ADP + CO2. It functions in the pathway carbohydrate biosynthesis; gluconeogenesis. In terms of biological role, involved in the gluconeogenesis. Catalyzes the conversion of oxaloacetate (OAA) to phosphoenolpyruvate (PEP) through direct phosphoryl transfer between the nucleoside triphosphate and OAA. This Vibrio cholerae serotype O1 (strain ATCC 39541 / Classical Ogawa 395 / O395) protein is Phosphoenolpyruvate carboxykinase (ATP).